Consider the following 86-residue polypeptide: Co-chaperonin GroES (86 aa).

The protein belongs to the GroES chaperonin family. Heptamer of 7 subunits arranged in a ring. Interacts with the chaperonin GroEL.

It localises to the cytoplasm. Its function is as follows. Together with the chaperonin GroEL, plays an essential role in assisting protein folding. The GroEL-GroES system forms a nano-cage that allows encapsulation of the non-native substrate proteins and provides a physical environment optimized to promote and accelerate protein folding. GroES binds to the apical surface of the GroEL ring, thereby capping the opening of the GroEL channel. The chain is Co-chaperonin GroES from Campylobacter jejuni subsp. jejuni serotype O:6 (strain 81116 / NCTC 11828).